The sequence spans 331 residues: MTERPPSEAARSDPQLEGRDAAEASMAPPHLVLLNGVAKETSRAAAAEPPVIELGARGGPGGGPAGGGGAARDLKGRDAATAEARHRVPTTELCRPPGPAPAPAPASVTAELPGDGRMVQLSPPALAAPAAPGRALLYSLSQPLASLGSGFFGEPDAFPMFTTNNRVKRRPSPYEMEITDGPHTKVVRRIFTNSRERWRQQNVNGAFAELRKLIPTHPPDKKLSKNEILRLAMKYINFLAKLLNDQEEEGTQRAKTGKDPVVGAGGGGGGGGGGAPPDDLLQDVLSPNSSCGSSLDGAASPDSYTEEPAPKHTARSLHPAMLPAADGAGPR.

Residues 1–22 (MTERPPSEAARSDPQLEGRDAA) are compositionally biased toward basic and acidic residues. Disordered stretches follow at residues 1 to 27 (MTERPPSEAARSDPQLEGRDAAEASMA) and 40 to 86 (ETSR…EARH). S12 is subject to Phosphoserine. The span at 56–70 (ARGGPGGGPAGGGGA) shows a compositional bias: gly residues. Residues 72–86 (RDLKGRDAATAEARH) show a composition bias toward basic and acidic residues. A phosphoserine mark is found at S122 and S172. The bHLH domain occupies 187-239 (VRRIFTNSRERWRQQNVNGAFAELRKLIPTHPPDKKLSKNEILRLAMKYINFL). Residues 249–331 (EGTQRAKTGK…LPAADGAGPR (83 aa)) form a disordered region. Gly residues predominate over residues 263 to 275 (GAGGGGGGGGGGA).

As to quaternary structure, efficient DNA binding requires dimerization with another bHLH protein. Forms heterodimers with TCF3. Binds to the LIM domain containing protein LMO2 and to DRG1. Can assemble in a complex with LDB1 and LMO2. Component of a TAL-1 complex composed at least of CBFA2T3, LDB1, TAL1 and TCF3. Interacts with SBNO2; this interaction inhibits TAL1 occupancy of the DCSTAMP promoter, leading to the activation of the DCSTAMP promoter by the transcription factor MITF. Post-translationally, phosphorylated on serine residues. Phosphorylation of Ser-122 is strongly stimulated by hypoxia. In terms of processing, ubiquitinated; subsequent to hypoxia-dependent phosphorylation of Ser-122, ubiquitination targets the protein for rapid degradation via the ubiquitin system. This process may be characteristic for microvascular endothelial cells, since it could not be observed in large vessel endothelial cells. In terms of tissue distribution, leukemic stem cell.

It is found in the nucleus. Implicated in the genesis of hemopoietic malignancies. It may play an important role in hemopoietic differentiation. Serves as a positive regulator of erythroid differentiation. This Homo sapiens (Human) protein is T-cell acute lymphocytic leukemia protein 1 (TAL1).